Consider the following 363-residue polypeptide: Phospho-N-acetylmuramoyl-pentapeptide-transferase (363 aa).

A run of 10 helical transmembrane segments spans residues 27–47 (SGCA…PFIA), 76–96 (TMGG…WADL), 97–117 (TNGF…VGFA), 137–157 (LGCE…LTPP), 171–191 (VLLP…TGFG), 202–222 (GLAI…SYLV), 242–262 (LAVF…FNAP), 265–285 (AVFM…AVAV), 292–312 (VLCI…IQIF), and 340–360 (KIVI…LATL).

This sequence belongs to the glycosyltransferase 4 family. MraY subfamily. Requires Mg(2+) as cofactor.

The protein resides in the cell inner membrane. The enzyme catalyses UDP-N-acetyl-alpha-D-muramoyl-L-alanyl-gamma-D-glutamyl-meso-2,6-diaminopimeloyl-D-alanyl-D-alanine + di-trans,octa-cis-undecaprenyl phosphate = di-trans,octa-cis-undecaprenyl diphospho-N-acetyl-alpha-D-muramoyl-L-alanyl-D-glutamyl-meso-2,6-diaminopimeloyl-D-alanyl-D-alanine + UMP. It participates in cell wall biogenesis; peptidoglycan biosynthesis. In terms of biological role, catalyzes the initial step of the lipid cycle reactions in the biosynthesis of the cell wall peptidoglycan: transfers peptidoglycan precursor phospho-MurNAc-pentapeptide from UDP-MurNAc-pentapeptide onto the lipid carrier undecaprenyl phosphate, yielding undecaprenyl-pyrophosphoryl-MurNAc-pentapeptide, known as lipid I. This Gluconobacter oxydans (strain 621H) (Gluconobacter suboxydans) protein is Phospho-N-acetylmuramoyl-pentapeptide-transferase.